The following is a 921-amino-acid chain: DNA ligase (921 aa).

NAD(+) is bound by residues 90–94 (DAAYD), 139–140 (SL), and Glu173. The active-site N6-AMP-lysine intermediate is the Lys175. Arg196, Glu235, Lys360, and Lys384 together coordinate NAD(+). Zn(2+) contacts are provided by Cys481, Cys484, Cys500, and Cys506. The segment at 663-688 (EAAIESAETQGGAASETTGAPTGAEA) is disordered. The BRCT domain maps to 839 to 921 (SLPQTLAGKT…AQLLETGSID (83 aa)).

This sequence belongs to the NAD-dependent DNA ligase family. LigA subfamily. Mg(2+) serves as cofactor. The cofactor is Mn(2+).

It catalyses the reaction NAD(+) + (deoxyribonucleotide)n-3'-hydroxyl + 5'-phospho-(deoxyribonucleotide)m = (deoxyribonucleotide)n+m + AMP + beta-nicotinamide D-nucleotide.. DNA ligase that catalyzes the formation of phosphodiester linkages between 5'-phosphoryl and 3'-hydroxyl groups in double-stranded DNA using NAD as a coenzyme and as the energy source for the reaction. It is essential for DNA replication and repair of damaged DNA. The chain is DNA ligase from Bifidobacterium longum subsp. infantis (strain ATCC 15697 / DSM 20088 / JCM 1222 / NCTC 11817 / S12).